The primary structure comprises 1570 residues: MRIELRSWSSIAFLFTLFIAYVVSESNFKPDIKLTKEGEIAKEYNYFDDSSNILVLRKDKLAISFDDGVSWKNVKETENERVIRYQFDPFNNNRAFAFTIDKFQYVTNDKGETWSKFEIYDPKNEKEHLTLNSIPHILFNAKNPDLAIFVVYHCPEDKKISNQCVNYHFLTTDGFKSNPKSLQTDASICTFAKSTKSYDVGKDETIYCSRNKLNSFGHIVESYIVASDDFFKTESKINHALAKSGSIIDIRVLQNFAIVVVQNDKFNTKSKVSLLVSKDGKNFNEADLKVDISYGIMTFLESSSSSIFLAVMDYSNSFRKFSLSTVYSSDSSGLSFSKVLDKVQGGSIQKVETIDGVWLANIADEIKDNKGKSKTLLDMLMGGGIDKNIKSRISYNDGEDWNLLKINNDGSCTTESECSLHLLNPTEKSGDGKFVTGPTPGILLSVGNKGSKLEKDINRMNTWISRDGGISWDFALDEPCLFSFGDQGNIIVAIPYYGKNKMNSSNMYFSLDQGKSWENVALEIPIFPLTLTTTVDGTSQRFILSGLIDSTPKDKADYSFAETLYAIDFSKAFGGKKCDSKKDFEDIYTRLDPSNDKPICIYGHKEKFRRRKQNSQCFVNELFEDVKVYDDPCECTVIDFECASGFSRSKEKECKPDKKKLANICRDKKSKKISLPDKALASGNKCKNPKEAAKEFVKTKEFKCSDYLDEDDKDKNKGNKHDIVSTFNEFDSELQQYTYVEQGETYSGENIILRTKANVAYASNNGGVEFVKIPVSDEIVTYYPGLVPGQVILITDSEKFYFSIDGGNTFQKKTAPAKPNVIGARIISFDKKDTEKFIWYSSENCDNPFSRDCSLVAYITEDGGENFQKLKEDVRSCDFVADVFEDVSDEIKNMIYCTVEDKSSRKLMLLSSTDYFKQSKKVFDNVVGYAITGNFLVAATIDDAEQSLKAKVTVDGQIFADADFPPDFHVDSQQAYTVLDSASKAIFIHVTTNNENGHEFGSILKSNSNGTSYSLTLDKVNRNRIGYVDYDRIEGIEGVIVSNIVANDHSKDRKKLKTQITHNDGGEWSYITPPVIDSKGKKYKCNGKSLSKCSLNLHGFTERADYRDTFSSASAIGLMMAVGNVGEYLEDFDKCSTFISRDGGITWKEIKKGVYMWEYGDRGTILVLVNAEKTTDKLMYSLDEGDTWHDYKFAEEPIDVLDLATVPSDTSRKFLIFGKSDRKMVSYSIDFTNIHKRQCQLDLDNPNDDDFEYWSPTHPSTPDNCLFGREAKYLRRAIGHDDCFIGSAPLIEGFKVTRNCSCTRKDYECDYNFFRDSDDTCKLVKGLSPSNRKKEMCKKENAFEYFEPTGYRKIPLSTCVGGKNFDTWKVHPCPGKQKEFNKHHGKELNSGSLLAVIGIPIAVFLLATWFVYERGIRRNGGFKRFGQIRLDLDDDDFHPIENNEVDKAINKIVKGGIVIVAASIAGFKTLRKVDRMLFDKVTSSLFRRRPGHRNYVHVPEMDEEEELFGNFRDNYEEELEEGTNNINEDFNDEPNDYEYEEETNDEVDSRLFNIDDQSDEELQSATPEDN.

An N-terminal signal peptide occupies residues 1-24 (MRIELRSWSSIAFLFTLFIAYVVS). Residues 25-1390 (ESNFKPDIKL…NKHHGKELNS (1366 aa)) lie on the Lumenal side of the membrane. BNR repeat units follow at residues 63–72 (ISFDDGVSWK), 105–116 (YVTNDKGETWSK), and 463–473 (WISRDGGISWD). The N-linked (GlcNAc...) asparagine glycan is linked to Asn-503. BNR repeat units follow at residues 508 to 518 (YFSLDQGKSWE), 801 to 812 (YFSIDGGNTFQK), and 858 to 869 (YITEDGGENFQK). Asn-1009 carries an N-linked (GlcNAc...) asparagine glycan. BNR repeat units lie at residues 1138–1148 (FISRDGGITWK) and 1179–1189 (MYSLDEGDTWH). N-linked (GlcNAc...) asparagine glycosylation is present at Asn-1299. Residues 1391 to 1411 (GSLLAVIGIPIAVFLLATWFV) form a helical membrane-spanning segment. Residues 1412 to 1570 (YERGIRRNGG…ELQSATPEDN (159 aa)) lie on the Cytoplasmic side of the membrane. The interval 1517-1570 (EELEEGTNNINEDFNDEPNDYEYEEETNDEVDSRLFNIDDQSDEELQSATPEDN) is disordered. 2 stretches are compositionally biased toward acidic residues: residues 1529–1546 (DFND…TNDE) and 1556–1570 (DQSD…PEDN).

Belongs to the VPS10-related sortilin family.

The protein localises to the golgi apparatus. Its subcellular location is the trans-Golgi network membrane. The protein resides in the prevacuolar compartment membrane. Its function is as follows. Functions as a sorting receptor in the Golgi compartment required for the intracellular sorting and delivery of soluble vacuolar proteins, like carboxypeptidase Y (CPY) and proteinase A. Executes multiple rounds of sorting by cycling between the late Golgi and a prevacuolar endosome-like compartment. The protein is Vacuolar protein sorting/targeting protein 10 (VPS10) of Debaryomyces hansenii (strain ATCC 36239 / CBS 767 / BCRC 21394 / JCM 1990 / NBRC 0083 / IGC 2968) (Yeast).